Reading from the N-terminus, the 811-residue chain is Phosphoinositide 3-kinase adapter protein 1 (811 aa).

The TIR domain maps to 8–146 (RGCDILIFYS…AVRKAISEDS (139 aa)). The necessary and sufficient to mediate inhibition of NF-kappa-B downstream of activated TLRs; may mediate interaction with MYD88 and TIRAP stretch occupies residues 10 to 145 (CDILIFYSPD…AAVRKAISED (136 aa)). The segment at 146 to 169 (SGCDSVTDTEPEDERELPFSKQTN) is disordered. The region spanning 182–318 (VQPDRIRCGA…NIPASGLHLF (137 aa)) is the DBB domain. Tyrosine 264 carries the post-translational modification Phosphotyrosine. 3 positions are modified to phosphotyrosine; by SYK: tyrosine 420, tyrosine 445, and tyrosine 460. At tyrosine 513 the chain carries Phosphotyrosine; by ABL1. Residues 525-551 (DLANRPPVPVPRPEASAPGPPPPPDNE) form a disordered region. Pro residues predominate over residues 530 to 550 (PPVPVPRPEASAPGPPPPPDN). A phosphotyrosine; by ABL1 mark is found at tyrosine 553, tyrosine 570, and tyrosine 594. Serine 642 bears the Phosphoserine mark. Phosphotyrosine; by ABL1 is present on tyrosine 694. Residues 702 to 811 (VLPARTELRR…PPPPVPPRGR (110 aa)) form a disordered region. Residues 707–716 (TELRRGDWKT) show a composition bias toward basic and acidic residues. Positions 717-740 (DSMSSTASSTSNRSSTRSLLSVSS) are enriched in low complexity. Position 718 is a phosphoserine (serine 718). A compositionally biased stretch (pro residues) spans 801 to 811 (HPPPPVPPRGR).

As to quaternary structure, homooligomer. Interacts (phosphorylated on tyrosine residues within YXXM motifs) with PIK3R1 (via SH2 domain); required for BCR- and TLR-mediated activation of phosphoinositide 3-kinase. Interacts (via polyproline C-terminal region) with ABI1 (via SH3 domain); the interaction promotes phosphorylation of PIK3AP1 by ABL1. May interact with MYD88 and TIRAP. Constitutively phosphorylated. Phosphorylated on tyrosine residues in C-terminal region by ABL1. Phosphorylated on tyrosine residues within the YXXM motifs by BTK and SYK. Isoform 1 and isoform 2 are phosphorylated on tyrosine residues, most likely within the YXXM motifs, via CD19 activation. Toll-like receptor activation induces appearance of a phosphorylated form associated with membranes. Predominantly expressed in spleen (at protein level). Expressed at lower levels in thymus, liver and lung. Expressed in B-cells, macrophages and natural killer (NK) cells.

It localises to the cytoplasm. It is found in the cell membrane. Its function is as follows. Signaling adapter that contributes to B-cell development by linking B-cell receptor (BCR) signaling to the phosphoinositide 3-kinase (PI3K)-Akt signaling pathway. Has a complementary role to the BCR coreceptor CD19, coupling BCR and PI3K activation by providing a docking site for the PI3K subunit PIK3R1. Alternatively, links Toll-like receptor (TLR) signaling to PI3K activation, a process preventing excessive inflammatory cytokine production. Also involved in the activation of PI3K in natural killer cells. May be involved in the survival of mature B-cells via activation of REL. The polypeptide is Phosphoinositide 3-kinase adapter protein 1 (Pik3ap1) (Mus musculus (Mouse)).